A 239-amino-acid polypeptide reads, in one-letter code: Fatty acid metabolism regulator protein (239 aa).

The region spanning 6-74 (QSPAGFAEEY…HGKPTKVNNF (69 aa)) is the HTH gntR-type domain. Positions 34 to 53 (ERELSELIGVTRTTLREVLQ) form a DNA-binding region, H-T-H motif.

Homodimer.

The protein resides in the cytoplasm. In terms of biological role, multifunctional regulator of fatty acid metabolism. Represses transcription of at least eight genes required for fatty acid transport and beta-oxidation including fadA, fadB, fadD, fadL and fadE. Activates transcription of at least three genes required for unsaturated fatty acid biosynthesis: fabA, fabB and iclR, the gene encoding the transcriptional regulator of the aceBAK operon encoding the glyoxylate shunt enzymes. Binding of FadR is specifically inhibited by long chain fatty acyl-CoA compounds. This is Fatty acid metabolism regulator protein from Salmonella typhi.